The following is a 98-amino-acid chain: Integration host factor subunit alpha (98 aa).

Belongs to the bacterial histone-like protein family. As to quaternary structure, heterodimer of an alpha and a beta chain.

Its function is as follows. This protein is one of the two subunits of integration host factor, a specific DNA-binding protein that functions in genetic recombination as well as in transcriptional and translational control. This chain is Integration host factor subunit alpha, found in Mannheimia succiniciproducens (strain KCTC 0769BP / MBEL55E).